Here is an 83-residue protein sequence, read N- to C-terminus: Antitoxin ChpS (83 aa).

The 46-residue stretch at 3 to 48 folds into the SpoVT-AbrB domain; that stretch reads ITIKRWGNSAGMVIPNIVMKELNLQPGQSVEAQVSNNQLILTPISR.

It belongs to the PemI family. As to quaternary structure, interacts with ChpB, inhibiting its endoribonuclease activity.

In terms of biological role, antitoxin component of a type II toxin-antitoxin (TA) system. May be involved in the regulation of cell growth. It acts as a suppressor of the endoribonuclease (inhibitory function) of ChpB protein. Both ChpS and ChpB probably bind to the promoter region of the chpS-chpB operon to autoregulate their synthesis. The protein is Antitoxin ChpS (chpS) of Escherichia coli (strain K12).